The chain runs to 262 residues: Glutamate racemase (262 aa).

Substrate contacts are provided by residues 5–6 and 37–38; these read DS and YG. Cys-69 acts as the Proton donor/acceptor in catalysis. 70 to 71 provides a ligand contact to substrate; that stretch reads NT. Catalysis depends on Cys-181, which acts as the Proton donor/acceptor. 182-183 contributes to the substrate binding site; sequence TH.

Belongs to the aspartate/glutamate racemases family.

It carries out the reaction L-glutamate = D-glutamate. Its pathway is cell wall biogenesis; peptidoglycan biosynthesis. Its function is as follows. Provides the (R)-glutamate required for cell wall biosynthesis. In Buchnera aphidicola subsp. Acyrthosiphon pisum (strain 5A), this protein is Glutamate racemase.